Consider the following 64-residue polypeptide: Large ribosomal subunit protein bL35 (64 aa).

Basic residues predominate over residues 1–15 (MPKQKSHSGASKRFR). The disordered stretch occupies residues 1–22 (MPKQKSHSGASKRFRVTGSGKV).

Belongs to the bacterial ribosomal protein bL35 family.

The polypeptide is Large ribosomal subunit protein bL35 (Frankia casuarinae (strain DSM 45818 / CECT 9043 / HFP020203 / CcI3)).